The chain runs to 127 residues: Glycine cleavage system H protein (127 aa).

Residues glutamate 22 to lysine 104 enclose the Lipoyl-binding domain. Lysine 63 is subject to N6-lipoyllysine.

Belongs to the GcvH family. In terms of assembly, the glycine cleavage system is composed of four proteins: P, T, L and H. (R)-lipoate is required as a cofactor.

Its function is as follows. The glycine cleavage system catalyzes the degradation of glycine. The H protein shuttles the methylamine group of glycine from the P protein to the T protein. The polypeptide is Glycine cleavage system H protein (Nitratidesulfovibrio vulgaris (strain DSM 19637 / Miyazaki F) (Desulfovibrio vulgaris)).